We begin with the raw amino-acid sequence, 59 residues long: Large ribosomal subunit protein uL30 (59 aa).

This sequence belongs to the universal ribosomal protein uL30 family. Part of the 50S ribosomal subunit.

The sequence is that of Large ribosomal subunit protein uL30 from Geotalea daltonii (strain DSM 22248 / JCM 15807 / FRC-32) (Geobacter daltonii).